Reading from the N-terminus, the 377-residue chain is Nitric oxide reductase FlRd-NAD(+) reductase (377 aa).

It belongs to the FAD-dependent oxidoreductase family. FAD serves as cofactor.

Its subcellular location is the cytoplasm. The enzyme catalyses 2 reduced [nitric oxide reductase rubredoxin domain] + NAD(+) + H(+) = 2 oxidized [nitric oxide reductase rubredoxin domain] + NADH. Its pathway is nitrogen metabolism; nitric oxide reduction. In terms of biological role, one of at least two accessory proteins for anaerobic nitric oxide (NO) reductase. Reduces the rubredoxin moiety of NO reductase. The polypeptide is Nitric oxide reductase FlRd-NAD(+) reductase (Escherichia coli O45:K1 (strain S88 / ExPEC)).